The primary structure comprises 766 residues: 5-methyltetrahydropteroyltriglutamate--homocysteine methyltransferase (766 aa).

Residues 16–19 and lysine 117 each bind 5-methyltetrahydropteroyltri-L-glutamate; that span reads RELK. Residues 442 to 444 and glutamate 495 each bind L-homocysteine; that span reads IGS. L-methionine-binding positions include 442 to 444 and glutamate 495; that span reads IGS. 5-methyltetrahydropteroyltri-L-glutamate-binding positions include 526-527 and tryptophan 572; that span reads RC. L-homocysteine is bound at residue aspartate 610. Aspartate 610 lines the L-methionine pocket. Glutamate 616 contacts 5-methyltetrahydropteroyltri-L-glutamate. Zn(2+)-binding residues include histidine 652, cysteine 654, and glutamate 676. The Proton donor role is filled by histidine 705. Cysteine 737 is a Zn(2+) binding site.

It belongs to the vitamin-B12 independent methionine synthase family. The cofactor is Zn(2+).

It catalyses the reaction 5-methyltetrahydropteroyltri-L-glutamate + L-homocysteine = tetrahydropteroyltri-L-glutamate + L-methionine. It functions in the pathway amino-acid biosynthesis; L-methionine biosynthesis via de novo pathway; L-methionine from L-homocysteine (MetE route): step 1/1. Catalyzes the transfer of a methyl group from 5-methyltetrahydrofolate to homocysteine resulting in methionine formation. This chain is 5-methyltetrahydropteroyltriglutamate--homocysteine methyltransferase, found in Bordetella avium (strain 197N).